The following is a 557-amino-acid chain: Ribonuclease J 2 (557 aa).

His-76, His-78, His-144, and Glu-166 together coordinate Zn(2+). 366-370 is a substrate binding site; the sequence is HASSH.

It belongs to the metallo-beta-lactamase superfamily. RNA-metabolizing metallo-beta-lactamase-like family. Bacterial RNase J subfamily. Homodimer, may be a subunit of the RNA degradosome. Zn(2+) serves as cofactor.

It localises to the cytoplasm. An RNase that has 5'-3' exonuclease and possibly endoonuclease activity. Involved in maturation of rRNA and in some organisms also mRNA maturation and/or decay. This Staphylococcus epidermidis (strain ATCC 35984 / DSM 28319 / BCRC 17069 / CCUG 31568 / BM 3577 / RP62A) protein is Ribonuclease J 2.